The chain runs to 1401 residues: Protein dispatched homolog 2 (1401 aa).

Disordered stretches follow at residues 1–91 (MDGD…LAPA) and 113–138 (DRAALCSHGSSLSPSPAPSQRDGTWK). The helical transmembrane segment at 170–190 (VAVLMLCLAVIFLCTLAGLLG) threads the bilayer. Asn-239 is a glycosylation site (N-linked (GlcNAc...) asparagine). Residues 241 to 264 (SSSHNTLRPAPRGSAQESAVRPRR) form a disordered region. N-linked (GlcNAc...) asparagine glycosylation is found at Asn-349 and Asn-465. The SSD domain maps to 471–643 (GMDLGLKQEL…LVWLPASAVL (173 aa)). 11 consecutive transmembrane segments (helical) span residues 484-504 (FLVQDTVYPLLALVAIFFGMA), 510-530 (LFLTLMVLLGVLGSLLVAFFL), 542-562 (FVNLAALLLLSSVCANHTLIF), 589-609 (FGYLLLVSGLTTSAAFYASYL), 617-637 (CLALFMGTAVLVHLALTLVWL), 704-724 (YIWICWFAALAAGGAYIAGVS), 964-984 (PAVVLGLALALAFATLLLGTW), 990-1010 (LFSVAAVAGTVLLTVGLLVLL), 1019-1039 (ALFLSASVGLSVDFTVNYCIS), 1064-1084 (AVGAAALFAAGVLMLPATVLL), and 1088-1108 (LGIILMMVKCVSCGFASFFFQ). 3 disordered regions span residues 1169–1192 (ARRRSPSFDTSTATSKLSHRPSVL), 1229–1337 (PALQ…NGKR), and 1352–1401 (SLPA…GYSS). The span at 1175–1184 (SFDTSTATSK) shows a compositional bias: polar residues. The span at 1259-1270 (PLPASPEAPAHS) shows a compositional bias: low complexity. Over residues 1284-1305 (SSASTLEGLSVSDETCLSTSEP) the composition is skewed to polar residues. Residues 1352-1362 (SLPASHHSSLS) show a composition bias toward low complexity. Arg-1366 is modified (omega-N-methylarginine).

Belongs to the dispatched family.

It localises to the membrane. This chain is Protein dispatched homolog 2, found in Homo sapiens (Human).